Reading from the N-terminus, the 416-residue chain is Xyloglucan O-acetyltransferase 1 (416 aa).

The Cytoplasmic portion of the chain corresponds to 1-14; the sequence is MGLNEQQNVPSQRK. Residues 15–35 form a helical; Signal-anchor for type II membrane protein membrane-spanning segment; the sequence is IIVFIVLAFIPIALFRLCFNN. The Lumenal segment spans residues 36-416; the sequence is PFSSIKDTSL…MIEMLRRWKV (381 aa). Cystine bridges form between Cys79/Cys129, Cys100/Cys165, Cys109/Cys395, and Cys318/Cys391. The N-linked (GlcNAc...) asparagine glycan is linked to Asn96. Residues 152 to 154 carry the GDS motif motif; the sequence is GDS. Ser154 acts as the Nucleophile in catalysis. N-linked (GlcNAc...) asparagine glycans are attached at residues Asn194, Asn269, and Asn319. The active-site Proton donor is Asp390. A DXXH motif motif is present at residues 390–393; it reads DCLH. The active-site Proton acceptor is His393.

This sequence belongs to the PC-esterase family. TBL subfamily.

The protein localises to the golgi apparatus membrane. In terms of biological role, xyloglucan acetyltransferase that catalyzes the acetylation of fucosylated Gal residues on xyloglucan side chains. Predominantly catalyze 6-O-monoacetylation of Gal residues in the Fuc-Gal-Xyl trisaccharide side chains of xyloglucan oligomers. Involved in xyloglucan specific O-acetylation in roots and rosette leaves. This chain is Xyloglucan O-acetyltransferase 1, found in Arabidopsis thaliana (Mouse-ear cress).